We begin with the raw amino-acid sequence, 224 residues long: Cerebellin-2 (224 aa).

An N-terminal signal peptide occupies residues 1-51 (MQAPGRGPLGLRLMMPGRRGALREPGGCGSCLGVALALLLLLLPACCPVRA). Residues asparagine 53 and asparagine 110 are each glycosylated (N-linked (GlcNAc...) asparagine). Positions 88–224 (SGSAKVAFSA…TFSGFLVFPL (137 aa)) constitute a C1q domain.

Homohexamer; disulfide-linked homotrimers. The trimers are assembled via the globular C1q domains. The trimers associate via N-terminal cysteine residues to form disulfide-linked hexamers. May form homooligomers or heterooligomers with CBLN1 and CBLN3 prior to secretion. Once secreted, does not interact with other CBLN family members. Interacts with GRID2, and more weakly with GRID1. Interacts with NRXN1 and NRXN2 long and short isoforms produced by alternative promoter usage. Weakly interacts with NRXN3 short isoform and not at all with NRXN3 long isoform.

It is found in the secreted. Its function is as follows. Acts as a synaptic organizer in specific subsets of neurons in the brain. Essential for long-term maintenance but not establishment of excitatory synapses. Functions as part of a trans-synaptic complex by binding to postsynaptic GRID1 and presynaptic neurexins. This interaction helps regulate the activity of NMDA and AMPA receptors at hippocampal synapses without affecting synapse formation. NRXN1B-CBLN2-GRID1 complex transduce presynaptic signals into postsynaptic NMDAR response. NRXN3B-CBLN2-GRID1 complex transduce presynaptic signals into postsynaptic AMPAR response. This chain is Cerebellin-2, found in Homo sapiens (Human).